A 95-amino-acid polypeptide reads, in one-letter code: LSM complex subunit LSM2 (95 aa).

A Sm domain is found at 2 to 76; that stretch reads LFFSFFKTLV…VRYVYLNKNM (75 aa).

This sequence belongs to the snRNP Sm proteins family. Component of the heptameric LSM1-LSM7 complex that forms a seven-membered ring structure with a donut shape. The LSm subunits are arranged in the order LSM1, LSM2, LSM3, LSM6, LSM5, LSM7 and LSM4. Except for LSM1, where a C-terminal helix crosses the ring structure to form additional interactions with LSM3 and LSM6, each subunit interacts only with its two neighboring subunits. The LSM1-LSM7 complex interacts with PAT1; within the complex PAT1 has direct interactions with LSM2 and LSM3. The LSM1-LSM7 complex interacts with XRN1. Component of the heptameric LSM2-LSM8 complex that forms a seven-membered ring structure with a donut shape; an RNA strand can pass through the hole in the center of the ring structure. The LSm subunits are arranged in the order LSM8, LSM2, LSM3, LSM6, LSM5, LSM7 and LSM4. Interacts with U6 snRNA SNR6 and chaperone PRP24; to promote formation of the U4/U6-U5 tri-snRNP (small nuclear ribonucleoprotein) complex, the LSM2-LSM8 complex preferentially binds U6 snRNA that has been modified to contain a non-cyclic 3' phosphate. Component of the spliceosome U4/U6-U5 tri-snRNP complex composed of the U4, U6 and U5 snRNAs and at least PRP3, PRP4, PRP6, PRP8, PRP18, PRP31, PRP38, SNU13, SNU23, SNU66, SNU114, SPP381, SMB1, SMD1, SMD2, SMD3, SMX2, SMX3, LSM2, LSM3, LSM4, LSM5, LSM6, LSM7, LSM8, BRR2 and DIB1. May be found in a complex comprising LSM2-LSM7 without LSM1 or LSM8; the complex associates with pre-P RNA and snoRNA SNR5.

The protein resides in the nucleus. Its subcellular location is the nucleolus. It is found in the cytoplasm. Functionally, component of LSm protein complexes, which are involved in RNA processing and may function in a chaperone-like manner. Component of the cytoplasmic LSM1-LSM7 complex which is involved in mRNA degradation by activating the decapping step. Together with PAT1, the LSM1-LSM7 complex binds to osmotic stress-activated mRNAs to attenuate the osmotic stress response, probably by limiting ribosome access to the mRNA and consequently translation. Component of the nuclear LSM2-LSM8 complex, which is involved in spliceosome assembly. The LSM2-LSM8 complex plays a role in the biogenesis of the spliceosomal U4/U6-U5 tri-snRNP complex by accelerating PRP24-mediated annealing of U4/U6 di-snRNA. The LSM2-LSM8 complex binds U6 snRNA terminating with a non-cyclic 3' phosphate group. LSM2-LSM8 is probably also involved in degradation of nuclear pre-mRNA by targeting them for decapping. LSM2-LSM8 could be involved in processing of pre-tRNAs, pre-rRNAs and U3 snoRNA, although involvement may be indirect. In a complex that probably contains LSM2-LSM7, but not LSM1 or LSM8, associates with the precursor of the RNA component of RNase P (pre-P RNA) and may be involved in maturing pre-P RNA; the complex also associates with snoRNA SNR5. This is LSM complex subunit LSM2 (LSM2) from Saccharomyces cerevisiae (strain ATCC 204508 / S288c) (Baker's yeast).